Consider the following 228-residue polypeptide: L-ribulose-5-phosphate 4-epimerase UlaF (228 aa).

Residues 26–27, 43–44, and 72–73 contribute to the substrate site; these read GN, SG, and SS. Zn(2+) contacts are provided by Asp74, His93, and His95. The active-site Proton donor/acceptor is Asp118. His167 lines the Zn(2+) pocket. The active-site Proton donor/acceptor is the Tyr225.

This sequence belongs to the aldolase class II family. AraD/FucA subfamily. Requires Zn(2+) as cofactor.

It carries out the reaction L-ribulose 5-phosphate = D-xylulose 5-phosphate. It participates in cofactor degradation; L-ascorbate degradation; D-xylulose 5-phosphate from L-ascorbate: step 4/4. Functionally, catalyzes the isomerization of L-ribulose 5-phosphate to D-xylulose 5-phosphate. Is involved in the anaerobic L-ascorbate utilization. The sequence is that of L-ribulose-5-phosphate 4-epimerase UlaF from Escherichia coli (strain SE11).